The sequence spans 193 residues: DNA damage-inducible transcript 4-like protein (193 aa).

This sequence belongs to the DDIT4 family.

Its subcellular location is the cytoplasm. Its function is as follows. Inhibits cell growth by regulating the TOR signaling pathway upstream of the TSC1-TSC2 complex and downstream of AKT1. The protein is DNA damage-inducible transcript 4-like protein (DDIT4L) of Pongo abelii (Sumatran orangutan).